The following is a 180-amino-acid chain: Large ribosomal subunit protein uL5 (180 aa).

The protein belongs to the universal ribosomal protein uL5 family. As to quaternary structure, part of the 50S ribosomal subunit; part of the 5S rRNA/L5/L18/L25 subcomplex. Contacts the 5S rRNA and the P site tRNA. Forms a bridge to the 30S subunit in the 70S ribosome.

This is one of the proteins that bind and probably mediate the attachment of the 5S RNA into the large ribosomal subunit, where it forms part of the central protuberance. In the 70S ribosome it contacts protein S13 of the 30S subunit (bridge B1b), connecting the 2 subunits; this bridge is implicated in subunit movement. Contacts the P site tRNA; the 5S rRNA and some of its associated proteins might help stabilize positioning of ribosome-bound tRNAs. The protein is Large ribosomal subunit protein uL5 of Xanthomonas campestris pv. campestris (strain 8004).